Here is a 572-residue protein sequence, read N- to C-terminus: Phosphoenolpyruvate-protein phosphotransferase (572 aa).

His-190 (tele-phosphohistidine intermediate) is an active-site residue. The phosphoenolpyruvate site is built by Arg-297 and Arg-333. Glu-427 and Asp-451 together coordinate Mg(2+). Phosphoenolpyruvate-binding positions include 450 to 451 (ND) and Arg-461. The Proton donor role is filled by Cys-498.

This sequence belongs to the PEP-utilizing enzyme family. Homodimer. Mg(2+) serves as cofactor.

It is found in the cytoplasm. It carries out the reaction L-histidyl-[protein] + phosphoenolpyruvate = N(pros)-phospho-L-histidyl-[protein] + pyruvate. Its function is as follows. General (non sugar-specific) component of the phosphoenolpyruvate-dependent sugar phosphotransferase system (sugar PTS). This major carbohydrate active-transport system catalyzes the phosphorylation of incoming sugar substrates concomitantly with their translocation across the cell membrane. Enzyme I transfers the phosphoryl group from phosphoenolpyruvate (PEP) to the phosphoryl carrier protein (HPr). The chain is Phosphoenolpyruvate-protein phosphotransferase (ptsI) from Mycoplasma pneumoniae (strain ATCC 29342 / M129 / Subtype 1) (Mycoplasmoides pneumoniae).